A 282-amino-acid polypeptide reads, in one-letter code: Bifunctional protein FolD (282 aa).

NADP(+) is bound by residues Gly165–Ser167 and Ile231.

It belongs to the tetrahydrofolate dehydrogenase/cyclohydrolase family. In terms of assembly, homodimer.

It carries out the reaction (6R)-5,10-methylene-5,6,7,8-tetrahydrofolate + NADP(+) = (6R)-5,10-methenyltetrahydrofolate + NADPH. The catalysed reaction is (6R)-5,10-methenyltetrahydrofolate + H2O = (6R)-10-formyltetrahydrofolate + H(+). It participates in one-carbon metabolism; tetrahydrofolate interconversion. Functionally, catalyzes the oxidation of 5,10-methylenetetrahydrofolate to 5,10-methenyltetrahydrofolate and then the hydrolysis of 5,10-methenyltetrahydrofolate to 10-formyltetrahydrofolate. This chain is Bifunctional protein FolD, found in Francisella tularensis subsp. tularensis (strain FSC 198).